The primary structure comprises 603 residues: Probable methyltransferase PMT4 (603 aa).

Residues 1 to 12 (MKVASVIGLRPR) lie on the Cytoplasmic side of the membrane. The helical; Signal-anchor for type II membrane protein transmembrane segment at 13-33 (ISGLLFLTLGVIALITILVPN) threads the bilayer. Residues 34-603 (SDSSSTTSTT…LVCQKPLLKK (570 aa)) are Lumenal-facing. N-linked (GlcNAc...) asparagine glycans are attached at residues asparagine 96 and asparagine 393.

The protein belongs to the methyltransferase superfamily.

It is found in the endoplasmic reticulum membrane. In Arabidopsis thaliana (Mouse-ear cress), this protein is Probable methyltransferase PMT4.